The sequence spans 362 residues: Phosphoserine aminotransferase (362 aa).

Arg43 lines the L-glutamate pocket. Pyridoxal 5'-phosphate contacts are provided by residues 77–78 (AR), Trp103, Thr153, Asp173, and Gln196. An N6-(pyridoxal phosphate)lysine modification is found at Lys197.

This sequence belongs to the class-V pyridoxal-phosphate-dependent aminotransferase family. SerC subfamily. Homodimer. Requires pyridoxal 5'-phosphate as cofactor.

Its subcellular location is the cytoplasm. The catalysed reaction is O-phospho-L-serine + 2-oxoglutarate = 3-phosphooxypyruvate + L-glutamate. It catalyses the reaction 4-(phosphooxy)-L-threonine + 2-oxoglutarate = (R)-3-hydroxy-2-oxo-4-phosphooxybutanoate + L-glutamate. It participates in amino-acid biosynthesis; L-serine biosynthesis; L-serine from 3-phospho-D-glycerate: step 2/3. The protein operates within cofactor biosynthesis; pyridoxine 5'-phosphate biosynthesis; pyridoxine 5'-phosphate from D-erythrose 4-phosphate: step 3/5. Catalyzes the reversible conversion of 3-phosphohydroxypyruvate to phosphoserine and of 3-hydroxy-2-oxo-4-phosphonooxybutanoate to phosphohydroxythreonine. The chain is Phosphoserine aminotransferase from Legionella pneumophila (strain Corby).